The following is a 1056-amino-acid chain: Potassium transporter TRK1 (1056 aa).

Over 1–46 the chain is Cytoplasmic; sequence MLYRVSGFYKRHTRNFTNIDYGYYIRNFIHHIASKIYPYAKVVLPN. The helical transmembrane segment at 47–67 threads the bilayer; it reads FRAAHYFYILTLVILGSILVY. The Extracellular portion of the chain corresponds to 68–73; the sequence is PVKTCA. The stretch at 74 to 90 is an intramembrane region; that stretch reads YIDVLFFTAGASTQAGL. At 91 to 99 the chain is on the extracellular side; the sequence is NTVNVNDLS. The helical transmembrane segment at 100-122 threads the bilayer; it reads LYQQIVLYLLATLATPIFIHGSL. Residues 123 to 622 lie on the Cytoplasmic side of the membrane; the sequence is LFVRLYYFER…LGGIEYRAVK (500 aa). 3 disordered regions span residues 180–276, 290–350, and 404–571; these read REAE…IDPE, KNQE…EDED, and PWTS…SIEN. Positions 186–203 are enriched in low complexity; the sequence is SSSSPQSSSSQTSQPVST. Residues 236–245 are compositionally biased toward basic and acidic residues; it reads EKIHFEEPQR. Polar residues predominate over residues 335 to 344; that stretch reads PATNSVGTGN. Residues 412–423 are compositionally biased toward low complexity; it reads TLSNSSKKGSLS. Composition is skewed to acidic residues over residues 428–449 and 469–487; these read DTED…SDIS and YEED…DDGE. Positions 521 to 533 are enriched in polar residues; that stretch reads RSNTLDTPQQNTS. Over residues 537–549 the composition is skewed to basic residues; the sequence is KIRKKAPKRKTPR. A compositionally biased stretch (polar residues) spans 553–563; the sequence is NASFNQHSNVS. The chain crosses the membrane as a helical span at residues 623–646; it reads LLIKIIVVYYVGFNIIPGVMLSIW. At 647–665 the chain is on the extracellular side; it reads IYCMPHYKNLMISSSISPA. Residues 666–682 lie within the membrane without spanning it; sequence WWAFFTSQSSFNDLGLT. The Extracellular portion of the chain corresponds to 683-693; sequence LTSNSMMSFNQ. The chain crosses the membrane as a helical span at residues 694–710; it reads NAFVQILCSFLIVIGNT. Over 711–754 the chain is Cytoplasmic; that stretch reads GFPILLRFIIWVMFKTARPLSLYKESLGFLLDHPRRCFTLLFPS. A helical membrane pass occupies residues 755-778; it reads VPTWWLFFILVVLNGFDLVIFCIL. The Extracellular portion of the chain corresponds to 779-793; the sequence is DLHDDTFKGVDMGYR. Residues 794-810 lie within the membrane without spanning it; it reads VLNGLFQAFCTRTVGFS. The Extracellular portion of the chain corresponds to 811-817; sequence VMDLSQL. Residues 818-841 form a helical membrane-spanning segment; the sequence is HAATQVSYLIMMYISVLPIAISVR. The Cytoplasmic portion of the chain corresponds to 842–874; the sequence is RTNVYEEQSLGVYAKENAEGVDESAPSNYVGSH. The helical transmembrane segment at 875–896 threads the bilayer; sequence LRNQLSYDLWYICLGLFIICIA. Over 897–909 the chain is Extracellular; the sequence is EGKRLKEQDLRFS. Residues 910–928 lie within the membrane without spanning it; the sequence is IFAVLFEIVSAYGTVGMSM. The Extracellular segment spans residues 929–942; sequence GYPGVDCSLSGEFN. A helical membrane pass occupies residues 943-965; it reads VISKLVIIAMMIRGRHRGLPYTI. At 966-1056 the chain is on the cytoplasmic side; that stretch reads DRAIMLPNAA…RYVVRTVSEV (91 aa).

The protein belongs to the TrkH potassium transport family.

The protein localises to the cell membrane. It carries out the reaction K(+)(in) = K(+)(out). The enzyme catalyses chloride(in) = chloride(out). Its activity is regulated as follows. TRK1-mediated chloride conductance is blocked by 4,4'-diisothiocyanatostilbene-2,2'-disulfonic acid. Potassium transporter that mediates K(+) influx, as well as Cl(-) efflux as a secondary function. TRK1 is the major K(+) uptake transporter that regulates membrane potential and intracellular pH. The TRK1-mediated Cl(-) efflux should serve as a Cl(-) detoxification route and may play a role in sustaining C.albicans on mammalian epithelial surfaces, or in physiological saline solutions such as saliva. Functionally, mediates candidacidal activities of cysteine-free peptides, but not of defensins. The hallmark of salivary gland-secreted histatin-5 (Hst 5) killing of C.albicans is the rapid efflux of cellular ATP and other small nucleotides and ions from the cell as well as concurrent intracellular uptake of propidium iodide (PI). TRK1 is the channel for Hst 5-induced killing and histatin-5 may directly or indirectly alter TRK1 function, allowing the efflux of larger anions, including ATP, and the influx of small cationic dyes, such as PI. This chain is Potassium transporter TRK1, found in Candida albicans (strain SC5314 / ATCC MYA-2876) (Yeast).